Reading from the N-terminus, the 101-residue chain is Apolipoprotein C-II (101 aa).

The N-terminal stretch at 1–22 (MGTRYLLVLLLVLLVLGFEVQG) is a signal peptide. Residues 66-74 (TMDEKIRDI) are lipid binding. The tract at residues 78 to 101 (STAAVSTYAGIFTDQLLSMLKGDS) is lipoprotein lipase cofactor.

The protein belongs to the apolipoprotein C2 family. Post-translationally, proapolipoprotein C-II is synthesized as a sialic acid containing glycoprotein which is subsequently desialylated prior to its proteolytic processing. In terms of processing, proapolipoprotein C-II, the major form found in plasma undergoes proteolytic cleavage of its N-terminal hexapeptide to generate apolipoprotein C-II, which occurs as the minor form in plasma. As to expression, highly expressed in the liver. Moderately expressed in the ileum, jejunum and ovary.

The protein resides in the secreted. In terms of biological role, component of chylomicrons, very low-density lipoproteins (VLDL), low-density lipoproteins (LDL), and high-density lipoproteins (HDL) in plasma. Plays an important role in lipoprotein metabolism as an activator of lipoprotein lipase. Both proapolipoprotein C-II and apolipoprotein C-II can activate lipoprotein lipase. This Canis lupus familiaris (Dog) protein is Apolipoprotein C-II (APOC2).